We begin with the raw amino-acid sequence, 344 residues long: Methionine import ATP-binding protein MetN (344 aa).

The 240-residue stretch at 2–241 (IEINRVNKIF…PKTALAQEFI (240 aa)) folds into the ABC transporter domain. 38 to 45 (GSSGAGKS) lines the ATP pocket.

The protein belongs to the ABC transporter superfamily. Methionine importer (TC 3.A.1.24) family. In terms of assembly, the complex is composed of two ATP-binding proteins (MetN), two transmembrane proteins (MetI) and a solute-binding protein (MetQ).

Its subcellular location is the cell inner membrane. It carries out the reaction L-methionine(out) + ATP + H2O = L-methionine(in) + ADP + phosphate + H(+). It catalyses the reaction D-methionine(out) + ATP + H2O = D-methionine(in) + ADP + phosphate + H(+). Part of the ABC transporter complex MetNIQ involved in methionine import. Responsible for energy coupling to the transport system. In Aliivibrio fischeri (strain ATCC 700601 / ES114) (Vibrio fischeri), this protein is Methionine import ATP-binding protein MetN.